The primary structure comprises 96 residues: Acylphosphatase (96 aa).

An Acylphosphatase-like domain is found at 4–96 (RCEFLIFGKV…ESLNDFEILR (93 aa)). Residues Arg-19 and Asn-42 contribute to the active site.

The protein belongs to the acylphosphatase family.

It catalyses the reaction an acyl phosphate + H2O = a carboxylate + phosphate + H(+). The chain is Acylphosphatase (acyP) from Helicobacter hepaticus (strain ATCC 51449 / 3B1).